The primary structure comprises 1127 residues: Disease resistance protein RPS6 (1127 aa).

Methionine 1 is subject to N-acetylmethionine. The 165-residue stretch at 12–176 (WSYHVFPSFS…EIANDILGKM (165 aa)) folds into the TIR domain. Residue glutamate 87 is part of the active site. LRR repeat units lie at residues 197-221 (MSSL…GIGK), 540-563 (IDET…LFLK), 587-609 (PSRL…NFHP), 610-632 (ENLV…VHSL), 633-656 (AGLR…SMAT), 658-679 (LETL…IQYL), 680-704 (NKLN…NLKS), 766-790 (SPTL…IQNL), 791-813 (YQLE…GINL), 814-834 (DSLI…PDIS), and 835-857 (TNIS…IEKL).

As to quaternary structure, interacts with EDS1. As to expression, ubiquitous.

It catalyses the reaction NAD(+) + H2O = ADP-D-ribose + nicotinamide + H(+). Functionally, disease resistance (R) protein that specifically recognizes the hopA1 type III effector avirulence protein from Pseudomonas syringae. Resistance proteins guard the plant against pathogens that contain an appropriate avirulence protein via an indirect interaction with this avirulence protein. That triggers a defense system including the hypersensitive response, which restricts the pathogen growth. This is Disease resistance protein RPS6 from Arabidopsis thaliana (Mouse-ear cress).